Reading from the N-terminus, the 1643-residue chain is MAQKPNFLKKIISAGLVTASTATIVAGFSGVAMGAAMQYNRTTNAAATTFDGIGFDQAAGANIPVAPNSVITANANNPITFNTPNGHLNSLFLDTANDLAVTINEDTTLGFITNIAQQAKFFNFTVAAGKILNITGQGITVQEASNTINAQNALTKVHGGAAINANDLSGLGSITFAAAPSVLEFNLINPTTQEAPLTLGANSKIVNGGNGTLNITNGFIQVSDNTFAGIKTINIDDCQGLMFNSTPDAANTLNLQVGGNTINFNGIDGTGKLVLVSKNGAATEFNVTGTLGGNLKGIIELNTAAVAGKLISQGGAANAVIGTDNGAGRAAGFIVSVDNGNAATISGQVYAKNMVIQSANAGGQVTFEHIVDVGLGGTTNFKTADSKVIITENSNFGSTNFGNLDTQIVVPDTKILKGNFIGDVKNNGNTAGVITFNANGALVSASTDPNIAVTNINAIEAEGAGVVELSGIHIAELRLGNGGSIFKLADGTVINGPVNQNALMNNNALAAGSIQLDGSAIITGDIGNGGVNAALQHITLANDASKILALDGANIIGANVGGAIHFQANGGTIKLTNTQNNIVVNFDLDITTDKTGVVDASSLTNNQTLTINGSIGTVVANTKTLAQLNIGSSKTILNAGDVAINELVIENNGSVQLNHNTYLITKTINAANQGQIIVAADPLNTNTTLADGTNLGSAENPLSTIHFATKAANADSILNVGKGVNLYANNITTNDANVGSLHFRSGGTSIVSGTVGGQQGHKLNNLILDNGTTVKFLGDTTFNGGTKIEGKSILQISNNYTTDHVESADNTGTLEFVNTDPITVTLNKQGAYFGVLKQVIISGPGNIVFNEIGNVGIVHGIAANSISFENASLGTSLFLPSGTPLDVLTIKSTVGNGTVDNFNAPIVVVSGIDSMINNGQIIGDKKNIIALSLGSDNSITVNANTLYSGIRTTKNNQGTVTLSGGMPNNPGTIYGLGLENGSPKLKQVTFTTDYNNLGSIIANNVTINDYVTLTTGGIAGTDFDAKITLGSVNGNANVRFVDSTFSDPRSMIVATQANKGTVTYLGNALVSNIGSLDTPVASVRFTGNDSGAGLQGNIYSQNIDFGTYNLTILNSNVILGGGTTAINGEIDLLTNNLIFANGTSTWGDNTSISTTLNVSSGNIGQVVIAEDAQVNATTTGTTTIKIQDNANANFSGTQAYTLIQGGARFNGTLGAPNFAVTGSNIFVKYELIRDSNQDYVLTRTNDVLNVVTTAVGNSAIANAPGVSQNISRCLESTNTAAYNNMLLAKDPSDVATFVGAIATDTSAAVTTVNLNDTQKTQDLLSNRLGTLRYLSNAETSDVAGSATGAVSSGDEAEVSYGVWAKPFYNIAEQDKKGGIAGYKAKTTGVVVGLDTLASDNLMIGAAIGITKTDIKHQDYKKGDKTDINGLSFSLYGSQQLVKNFFAQGNAIFTLNKVKSKSQRYFFESNGKMSKQIAAGNYDNMTFGGNLIFGYDYNAMPNVLVTPMAGLSYLKSSNENYKETGTTVANKRINSKFSDRVDLIVGAKVAGSTVNITDIVIYPEIHSFVVHKVNGKLSNSQSMLDGQTAPFISQPDRTAKTSYNIGLSANIKSDAKMEYGIGYDFNSASKYTAHQGTLKVRVNF.

Positions 1329-1352 (GTLRYLSNAETSDVAGSATGAVSS) are excised as a propeptide. An Autotransporter domain is found at 1355–1643 (EAEVSYGVWA…QGTLKVRVNF (289 aa)).

It belongs to the rickettsiae OmpA/OmpB family.

It localises to the periplasm. The protein localises to the secreted. It is found in the cell surface. The protein resides in the cell outer membrane. Its function is as follows. The 120 kDa surface-exposed protein is a major structural protein which may play a role as a rickettsial virulence factor and/or immunogen during infection. Functionally, the 32 kDa beta peptide may serve as a membrane anchor. It has been shown to adhere to biotinylated Vero cell proteins. The sequence is that of Outer membrane protein B (ompB) from Rickettsia prowazekii (strain Madrid E).